The primary structure comprises 133 residues: Ribulose bisphosphate carboxylase small subunit (133 aa).

This sequence belongs to the RuBisCO small chain family. In terms of assembly, heterohexadecamer of 8 large and 8 small subunits.

In terms of biological role, ruBisCO catalyzes two reactions: the carboxylation of D-ribulose 1,5-bisphosphate, the primary event in carbon dioxide fixation, as well as the oxidative fragmentation of the pentose substrate. Both reactions occur simultaneously and in competition at the same active site. Although the small subunit is not catalytic it is essential for maximal activity. The protein is Ribulose bisphosphate carboxylase small subunit of Xanthobacter flavus.